The sequence spans 149 residues: MKCPFCGHAATQVIDTRMSEEGDTVRRRRRCESCDRRFTTYERIELFFPAVVKKNGSRVDYDRNKVKDSMRLALRKRPVSAEAIDEAIARIEEKLLSHGEKEIGSDRIGELVMRELKRLDKIGYIRFASVYRSFEDVSEFRDMLDEFRQ.

A zinc finger lies at 3-34; that stretch reads CPFCGHAATQVIDTRMSEEGDTVRRRRRCESC. The ATP-cone domain maps to 49-139; that stretch reads PAVVKKNGSR…VYRSFEDVSE (91 aa).

The protein belongs to the NrdR family. Zn(2+) is required as a cofactor.

In terms of biological role, negatively regulates transcription of bacterial ribonucleotide reductase nrd genes and operons by binding to NrdR-boxes. The sequence is that of Transcriptional repressor NrdR from Ralstonia nicotianae (strain ATCC BAA-1114 / GMI1000) (Ralstonia solanacearum).